We begin with the raw amino-acid sequence, 126 residues long: Histone H2B type 1-B (126 aa).

The span at 1 to 12 (MPEPSKSAPAPK) shows a compositional bias: low complexity. Residues 1 to 36 (MPEPSKSAPAPKKGSKKAISKAQKKDGKKRKRSRKE) form a disordered region. Pro2 is subject to N-acetylproline. ADP-ribosyl glutamic acid is present on Glu3. The residue at position 6 (Lys6) is an N6-(2-hydroxyisobutyryl)lysine; alternate. An N6-(beta-hydroxybutyryl)lysine; alternate modification is found at Lys6. Lys6 carries the N6-acetyllysine; alternate modification. Lys6 carries the N6-butyryllysine; alternate modification. Lys6 is subject to N6-crotonyllysine; alternate. N6-lactoyllysine; alternate is present on Lys6. Lys6 is covalently cross-linked (Glycyl lysine isopeptide (Lys-Gly) (interchain with G-Cter in SUMO2); alternate). Ser7 carries the post-translational modification ADP-ribosylserine. At Lys12 the chain carries N6-(beta-hydroxybutyryl)lysine; alternate. Lys12 and Lys13 each carry N6-acetyllysine; alternate. N6-crotonyllysine; alternate occurs at positions 12 and 13. Position 12 is an N6-lactoyllysine; alternate (Lys12). The residue at position 13 (Lys13) is an N6-(2-hydroxyisobutyryl)lysine; alternate. The residue at position 15 (Ser15) is a Phosphoserine; by STK4/MST1. Lys16, Lys17, Lys21, and Lys24 each carry N6-acetyllysine; alternate. Lys16, Lys17, Lys21, and Lys24 each carry N6-crotonyllysine; alternate. Residues Lys16, Lys17, Lys21, and Lys24 each carry the N6-lactoyllysine; alternate modification. Lys17 is modified (N6-glutaryllysine; alternate). Residues Lys21 and Lys24 each carry the N6-(2-hydroxyisobutyryl)lysine; alternate modification. Lys21 bears the N6-(beta-hydroxybutyryl)lysine; alternate mark. Lys21 carries the post-translational modification N6-butyryllysine; alternate. A Glycyl lysine isopeptide (Lys-Gly) (interchain with G-Cter in SUMO2); alternate cross-link involves residue Lys21. N6-(2-hydroxyisobutyryl)lysine is present on Lys25. Lys35 is modified (N6-(2-hydroxyisobutyryl)lysine; alternate). Lys35 is modified (N6-(beta-hydroxybutyryl)lysine; alternate). Lys35 carries the post-translational modification N6-crotonyllysine; alternate. N6-glutaryllysine; alternate is present on Lys35. Lys35 carries the N6-succinyllysine; alternate modification. Lys35 is covalently cross-linked (Glycyl lysine isopeptide (Lys-Gly) (interchain with G-Cter in ubiquitin); alternate). Position 36 is a polyADP-ribosyl glutamic acid (Glu36). Phosphoserine; by AMPK is present on Ser37. N6-(2-hydroxyisobutyryl)lysine; alternate occurs at positions 44, 47, and 58. N6-lactoyllysine; alternate is present on Lys44. An N6-glutaryllysine; alternate mark is found at Lys44 and Lys47. Position 47 is an N6-methyllysine; alternate (Lys47). Lys58 carries the post-translational modification N6,N6-dimethyllysine; alternate. Arg80 is subject to Dimethylated arginine. Position 86 is an N6-(2-hydroxyisobutyryl)lysine; alternate (Lys86). Lys86 is modified (N6-acetyllysine; alternate). Position 86 is an N6-lactoyllysine; alternate (Lys86). At Lys86 the chain carries N6,N6,N6-trimethyllysine; alternate. Omega-N-methylarginine is present on residues Arg87 and Arg93. Residue Lys109 is modified to N6-(2-hydroxyisobutyryl)lysine; alternate. Lys109 carries the N6-(beta-hydroxybutyryl)lysine; alternate modification. Lys109 is modified (N6-lactoyllysine; alternate). Lys109 is modified (N6-glutaryllysine; alternate). At Lys109 the chain carries N6-methyllysine; alternate. Ser113 is a glycosylation site (O-linked (GlcNAc) serine). Thr116 carries the phosphothreonine modification. N6-(2-hydroxyisobutyryl)lysine; alternate is present on residues Lys117 and Lys121. Lys117 is subject to N6-(beta-hydroxybutyryl)lysine; alternate. Residues Lys117 and Lys121 each carry the N6-lactoyllysine; alternate modification. 2 positions are modified to N6-glutaryllysine; alternate: Lys117 and Lys121. N6-succinyllysine; alternate occurs at positions 117 and 121. Lys117 carries the N6-methylated lysine; alternate modification. Residue Lys121 forms a Glycyl lysine isopeptide (Lys-Gly) (interchain with G-Cter in ubiquitin); alternate linkage.

Belongs to the histone H2B family. The nucleosome is a histone octamer containing two molecules each of H2A, H2B, H3 and H4 assembled in one H3-H4 heterotetramer and two H2A-H2B heterodimers. The octamer wraps approximately 147 bp of DNA. Post-translationally, monoubiquitination at Lys-35 (H2BK34Ub) by the MSL1/MSL2 dimer is required for histone H3 'Lys-4' (H3K4me) and 'Lys-79' (H3K79me) methylation and transcription activation at specific gene loci, such as HOXA9 and MEIS1 loci. Similarly, monoubiquitination at Lys-121 (H2BK120Ub) by the RNF20/40 complex gives a specific tag for epigenetic transcriptional activation and is also prerequisite for histone H3 'Lys-4' and 'Lys-79' methylation. It also functions cooperatively with the FACT dimer to stimulate elongation by RNA polymerase II. H2BK120Ub also acts as a regulator of mRNA splicing: deubiquitination by USP49 is required for efficient cotranscriptional splicing of a large set of exons. In terms of processing, phosphorylated on Ser-15 (H2BS14ph) by STK4/MST1 during apoptosis; which facilitates apoptotic chromatin condensation. Also phosphorylated on Ser-15 in response to DNA double strand breaks (DSBs), and in correlation with somatic hypermutation and immunoglobulin class-switch recombination. Phosphorylation at Ser-37 (H2BS36ph) by AMPK in response to stress promotes transcription. GlcNAcylation at Ser-113 promotes monoubiquitination of Lys-121. It fluctuates in response to extracellular glucose, and associates with transcribed genes. Post-translationally, ADP-ribosylated by PARP1 or PARP2 on Ser-7 (H2BS6ADPr) in response to DNA damage. H2BS6ADPr promotes recruitment of CHD1L. Mono-ADP-ribosylated on Glu-3 (H2BE2ADPr) by PARP3 in response to single-strand breaks. Poly ADP-ribosylation on Glu-36 (H2BE35ADPr) by PARP1 regulates adipogenesis: it inhibits phosphorylation at Ser-37 (H2BS36ph), thereby blocking expression of pro-adipogenetic genes. In terms of processing, hydroxybutyrylation of histones is induced by starvation. Crotonylation (Kcr) is specifically present in male germ cells and marks testis-specific genes in post-meiotic cells, including X-linked genes that escape sex chromosome inactivation in haploid cells. Crotonylation marks active promoters and enhancers and confers resistance to transcriptional repressors. It is also associated with post-meiotically activated genes on autosomes. Post-translationally, lactylated in macrophages by EP300/P300 by using lactoyl-CoA directly derived from endogenous or exogenous lactate, leading to stimulates gene transcription.

The protein localises to the nucleus. It localises to the chromosome. In terms of biological role, core component of nucleosome. Nucleosomes wrap and compact DNA into chromatin, limiting DNA accessibility to the cellular machineries which require DNA as a template. Histones thereby play a central role in transcription regulation, DNA repair, DNA replication and chromosomal stability. DNA accessibility is regulated via a complex set of post-translational modifications of histones, also called histone code, and nucleosome remodeling. The chain is Histone H2B type 1-B from Mus musculus (Mouse).